The sequence spans 225 residues: Putative 5'-nucleotidase alr3139 (225 aa).

Residues Asp-8, Asp-9, Ser-37, and Asn-88 each coordinate a divalent metal cation.

The protein belongs to the SurE nucleotidase family. The cofactor is a divalent metal cation.

The protein localises to the cytoplasm. It carries out the reaction a ribonucleoside 5'-phosphate + H2O = a ribonucleoside + phosphate. Nucleotidase that shows phosphatase activity on nucleoside 5'-monophosphates. The chain is Putative 5'-nucleotidase alr3139 from Synechocystis sp. (strain ATCC 27184 / PCC 6803 / Kazusa).